Here is a 715-residue protein sequence, read N- to C-terminus: MAAAALLAAVDRNQLRRVPILLLQPREWPWKHRTVKYGTTPGGSITKVLIANRGEIACRVIRTARKMGVQSVAVYSEADRNSMHVDMADEAYSIGPAPSQQSYLAMEKIIQVAKSSAAQAIHPGYGFLSENMEFAEFCKQEGIIFIGPPSTAIRDMGIKSTSKSIMAAAGVPVVEGYHGNDQSDECLKEHAGKIGYPVMIKAIRGGGGKGMRIIRSEKEFQEQLESARREAKKSFNDDAMLIEKFVDTPRHVEVQVFGDHHGNAVYLFERDCSVQRRHQKIIEEAPAPGIDPEVRRRLGEAAVRAAKAVNYVGAGTVEFIMDSKHNFYFMEMNTRLQVEHPVTEMITGTDLVEWQLRIAAGEKIPLSQEEIPLQGHAFEARIYAEDPDNNFMPGAGPLVHLSTPPPDMSTRIETGVRQGDEVSVHYDPMIAKLVVWASDRQSALSKLRYSLHQYNIVGLRTNVDFLLRLSGHSEFEAGNVHTDFIPQHHKDLLPTHSTIAKESVCQAALGLILKEKEMTSAFKLHTQDQFSPFSFSSGRRLNISYTRNMTLRSGKNDIIIAVTYNRDGSYDMQIENKLFRVLGDLSNEDGYTYLKSSVNGVASKSKFILLDNTIYLFSMEGSIEVGIPVPKYLSPVSAEGTQGGTIAPMTGTIEKVFVKAGDRVKAGDALMVMIAMKMEHTIKAPKDGRIKKVFFSEGAQANRHAPLVEFEEEEV.

The transit peptide at 1–38 (MAAAALLAAVDRNQLRRVPILLLQPREWPWKHRTVKYG) directs the protein to the mitochondrion. A Biotin carboxylation domain is found at 45-490 (ITKVLIANRG…HTDFIPQHHK (446 aa)). An ATP-binding site is contributed by Lys159. The region spanning 163-360 (KSIMAAAGVP…LVEWQLRIAA (198 aa)) is the ATP-grasp domain. Lys193 carries the N6-acetyllysine modification. Residues Lys201 and 207–208 (GG) each bind ATP. An N6-acetyllysine modification is found at Lys233. Residues His251, His278, and Glu318 each coordinate ATP. Residue Arg335 is part of the active site. An N6-acetyllysine modification is found at Lys490. At Lys577 the chain carries N6-acetyllysine; alternate. Lys577 is subject to N6-succinyllysine; alternate. In terms of domain architecture, Biotinyl-binding spans 622–711 (SIEVGIPVPK…NRHAPLVEFE (90 aa)). The residue at position 677 (Lys677) is an N6-biotinyllysine.

In terms of assembly, probably a dodecamer composed of six biotin-containing alpha subunits (MCCC1) and six beta (MCCC2) subunits. Interacts (via the biotin carboxylation domain) with SIRT4. Requires biotin as cofactor. Acetylated.

Its subcellular location is the mitochondrion matrix. The enzyme catalyses 3-methylbut-2-enoyl-CoA + hydrogencarbonate + ATP = 3-methyl-(2E)-glutaconyl-CoA + ADP + phosphate + H(+). The protein operates within amino-acid degradation; L-leucine degradation; (S)-3-hydroxy-3-methylglutaryl-CoA from 3-isovaleryl-CoA: step 2/3. Its function is as follows. Biotin-attachment subunit of the 3-methylcrotonyl-CoA carboxylase, an enzyme that catalyzes the conversion of 3-methylcrotonyl-CoA to 3-methylglutaconyl-CoA, a critical step for leucine and isovaleric acid catabolism. This chain is Methylcrotonoyl-CoA carboxylase subunit alpha, mitochondrial, found in Rattus norvegicus (Rat).